Reading from the N-terminus, the 457-residue chain is Oxygen-independent coproporphyrinogen III oxidase (457 aa).

The 233-residue stretch at 47–279 (LKNPMPLSLY…EILESLISFL (233 aa)) folds into the Radical SAM core domain. Y56 lines the S-adenosyl-L-methionine pocket. C62 and C66 together coordinate [4Fe-4S] cluster. F68 contributes to the S-adenosyl-L-methionine binding site. C69 contacts [4Fe-4S] cluster. S-adenosyl-L-methionine contacts are provided by residues G113, 114–115 (GT), E147, Q174, R186, D211, A245, and I331.

The protein belongs to the anaerobic coproporphyrinogen-III oxidase family. In terms of assembly, monomer. It depends on [4Fe-4S] cluster as a cofactor.

It localises to the cytoplasm. The catalysed reaction is coproporphyrinogen III + 2 S-adenosyl-L-methionine = protoporphyrinogen IX + 2 5'-deoxyadenosine + 2 L-methionine + 2 CO2. It participates in porphyrin-containing compound metabolism; protoporphyrin-IX biosynthesis; protoporphyrinogen-IX from coproporphyrinogen-III (AdoMet route): step 1/1. Functionally, involved in the heme biosynthesis. Catalyzes the anaerobic oxidative decarboxylation of propionate groups of rings A and B of coproporphyrinogen III to yield the vinyl groups in protoporphyrinogen IX. The chain is Oxygen-independent coproporphyrinogen III oxidase (hemN) from Helicobacter pylori (strain ATCC 700392 / 26695) (Campylobacter pylori).